The primary structure comprises 168 residues: uncharacterized protein (168 aa).

The segment at residues M1–A21 is a signal peptide (or 19).

This is an uncharacterized protein from Haemophilus influenzae (strain ATCC 51907 / DSM 11121 / KW20 / Rd).